Reading from the N-terminus, the 312-residue chain is Coiled-coil domain-containing protein 160 homolog (312 aa).

Residues Ser126–Ser281 are a coiled coil.

Belongs to the CCDC160 family.

This chain is Coiled-coil domain-containing protein 160 homolog, found in Xenopus tropicalis (Western clawed frog).